Reading from the N-terminus, the 545-residue chain is Chaperonin GroEL (545 aa).

Residues 29–32, Lys50, 86–90, Gly415, and Asp495 contribute to the ATP site; these read TLGP and DGTTT.

The protein belongs to the chaperonin (HSP60) family. As to quaternary structure, forms a cylinder of 14 subunits composed of two heptameric rings stacked back-to-back. Interacts with the co-chaperonin GroES.

Its subcellular location is the cytoplasm. It catalyses the reaction ATP + H2O + a folded polypeptide = ADP + phosphate + an unfolded polypeptide.. Its function is as follows. Together with its co-chaperonin GroES, plays an essential role in assisting protein folding. The GroEL-GroES system forms a nano-cage that allows encapsulation of the non-native substrate proteins and provides a physical environment optimized to promote and accelerate protein folding. The sequence is that of Chaperonin GroEL from Porphyromonas gingivalis (strain ATCC BAA-308 / W83).